Here is a 922-residue protein sequence, read N- to C-terminus: Isoleucine--tRNA ligase (922 aa).

A 'HIGH' region motif is present at residues 58-68 (PYANGDIHIGH). E552 contacts L-isoleucyl-5'-AMP. A 'KMSKS' region motif is present at residues 593-597 (KMSKS). Residue K596 participates in ATP binding. Zn(2+) is bound by residues C885, C888, C905, and C908.

Belongs to the class-I aminoacyl-tRNA synthetase family. IleS type 1 subfamily. In terms of assembly, monomer. Requires Zn(2+) as cofactor.

It is found in the cytoplasm. It catalyses the reaction tRNA(Ile) + L-isoleucine + ATP = L-isoleucyl-tRNA(Ile) + AMP + diphosphate. In terms of biological role, catalyzes the attachment of isoleucine to tRNA(Ile). As IleRS can inadvertently accommodate and process structurally similar amino acids such as valine, to avoid such errors it has two additional distinct tRNA(Ile)-dependent editing activities. One activity is designated as 'pretransfer' editing and involves the hydrolysis of activated Val-AMP. The other activity is designated 'posttransfer' editing and involves deacylation of mischarged Val-tRNA(Ile). The chain is Isoleucine--tRNA ligase from Ruthia magnifica subsp. Calyptogena magnifica.